Consider the following 71-residue polypeptide: Defensin-like protein 292 (71 aa).

Cystine bridges form between Cys44–Cys64, Cys50–Cys69, and Cys56–Cys71.

This sequence belongs to the DEFL family.

In Arabidopsis thaliana (Mouse-ear cress), this protein is Defensin-like protein 292.